The sequence spans 252 residues: Pantothenate synthetase (252 aa).

29–36 serves as a coordination point for ATP; that stretch reads MGNLHAGH. The active-site Proton donor is His36. Gln60 provides a ligand contact to (R)-pantoate. Gln60 serves as a coordination point for beta-alanine. Residue 146 to 149 coordinates ATP; the sequence is GEKD. Gln152 serves as a coordination point for (R)-pantoate. ATP is bound by residues Val175 and 183–186; that span reads CSSR.

This sequence belongs to the pantothenate synthetase family. Homodimer.

It localises to the cytoplasm. The enzyme catalyses (R)-pantoate + beta-alanine + ATP = (R)-pantothenate + AMP + diphosphate + H(+). Its pathway is cofactor biosynthesis; (R)-pantothenate biosynthesis; (R)-pantothenate from (R)-pantoate and beta-alanine: step 1/1. Functionally, catalyzes the condensation of pantoate with beta-alanine in an ATP-dependent reaction via a pantoyl-adenylate intermediate. This is Pantothenate synthetase from Legionella pneumophila subsp. pneumophila (strain Philadelphia 1 / ATCC 33152 / DSM 7513).